A 164-amino-acid chain; its full sequence is Protein SprT (164 aa).

Residues 14–156 (QQAETFFKRP…LCKRCRETLV (143 aa)) enclose the SprT-like domain. Histidine 69 is a Zn(2+) binding site. Residue glutamate 70 is part of the active site. Residue histidine 73 coordinates Zn(2+).

Belongs to the SprT family. It depends on Zn(2+) as a cofactor.

The protein resides in the cytoplasm. This chain is Protein SprT, found in Pseudomonas putida (strain W619).